We begin with the raw amino-acid sequence, 616 residues long: Dihydroxy-acid dehydratase (616 aa).

Asp81 is a Mg(2+) binding site. Cys122 contacts [2Fe-2S] cluster. Mg(2+)-binding residues include Asp123 and Lys124. Lys124 carries the N6-carboxylysine modification. Cys195 provides a ligand contact to [2Fe-2S] cluster. Glu491 serves as a coordination point for Mg(2+). Ser517 functions as the Proton acceptor in the catalytic mechanism.

It belongs to the IlvD/Edd family. Homodimer. [2Fe-2S] cluster serves as cofactor. Requires Mg(2+) as cofactor.

It carries out the reaction (2R)-2,3-dihydroxy-3-methylbutanoate = 3-methyl-2-oxobutanoate + H2O. The enzyme catalyses (2R,3R)-2,3-dihydroxy-3-methylpentanoate = (S)-3-methyl-2-oxopentanoate + H2O. It participates in amino-acid biosynthesis; L-isoleucine biosynthesis; L-isoleucine from 2-oxobutanoate: step 3/4. It functions in the pathway amino-acid biosynthesis; L-valine biosynthesis; L-valine from pyruvate: step 3/4. Functions in the biosynthesis of branched-chain amino acids. Catalyzes the dehydration of (2R,3R)-2,3-dihydroxy-3-methylpentanoate (2,3-dihydroxy-3-methylvalerate) into 2-oxo-3-methylpentanoate (2-oxo-3-methylvalerate) and of (2R)-2,3-dihydroxy-3-methylbutanoate (2,3-dihydroxyisovalerate) into 2-oxo-3-methylbutanoate (2-oxoisovalerate), the penultimate precursor to L-isoleucine and L-valine, respectively. The chain is Dihydroxy-acid dehydratase from Shewanella woodyi (strain ATCC 51908 / MS32).